The chain runs to 303 residues: Ribosomal protein uL3 glutamine methyltransferase (303 aa).

It belongs to the protein N5-glutamine methyltransferase family. PrmB subfamily.

The enzyme catalyses L-glutaminyl-[ribosomal protein uL3] + S-adenosyl-L-methionine = N(5)-methyl-L-glutaminyl-[ribosomal protein uL3] + S-adenosyl-L-homocysteine + H(+). Methylates large ribosomal subunit protein uL3 on a specific glutamine residue. In Neisseria meningitidis serogroup A / serotype 4A (strain DSM 15465 / Z2491), this protein is Ribosomal protein uL3 glutamine methyltransferase.